The sequence spans 208 residues: Large ribosomal subunit protein uL4 (208 aa).

The interval 44–85 is disordered; it reads RQGTKKTKTRAEVRGGGKKPWRQKGTGRARQGSIRAPHWRGG. Over residues 59–70 the composition is skewed to basic residues; the sequence is GGKKPWRQKGTG.

Belongs to the universal ribosomal protein uL4 family. As to quaternary structure, part of the 50S ribosomal subunit.

One of the primary rRNA binding proteins, this protein initially binds near the 5'-end of the 23S rRNA. It is important during the early stages of 50S assembly. It makes multiple contacts with different domains of the 23S rRNA in the assembled 50S subunit and ribosome. Functionally, forms part of the polypeptide exit tunnel. The protein is Large ribosomal subunit protein uL4 of Mesoplasma florum (strain ATCC 33453 / NBRC 100688 / NCTC 11704 / L1) (Acholeplasma florum).